A 196-amino-acid chain; its full sequence is Large ribosomal subunit protein uL5 (196 aa).

It belongs to the universal ribosomal protein uL5 family. As to quaternary structure, part of the 50S ribosomal subunit; part of the 5S rRNA/L5/L18/L25 subcomplex. Contacts the 5S rRNA and the P site tRNA. Forms a bridge to the 30S subunit in the 70S ribosome.

Functionally, this is one of the proteins that bind and probably mediate the attachment of the 5S RNA into the large ribosomal subunit, where it forms part of the central protuberance. In the 70S ribosome it contacts protein S13 of the 30S subunit (bridge B1b), connecting the 2 subunits; this bridge is implicated in subunit movement. Contacts the P site tRNA; the 5S rRNA and some of its associated proteins might help stabilize positioning of ribosome-bound tRNAs. This Prosthecochloris aestuarii (strain DSM 271 / SK 413) protein is Large ribosomal subunit protein uL5.